The primary structure comprises 887 residues: Multiple RNA-binding domain-containing protein 1 (887 aa).

In terms of domain architecture, RRM 1 spans 2–94; sequence SRIIVKGLPV…SKIEVSMAKS (93 aa). Disordered regions lie at residues 121–143, 203–276, and 297–336; these read KLLQEENRKKKKVDENKHSNIDD, KEEN…RNLA, and SEAETREKSSSYATEQNESLDTKKEEQPERAVPQKTDEEL. Phosphoserine is present on residues Ser220 and Ser264. Basic and acidic residues predominate over residues 264 to 276; it reads SDEKENEKRRNLA. Residues 306–315 are compositionally biased toward polar residues; sequence SSYATEQNES. A compositionally biased stretch (basic and acidic residues) spans 316–325; the sequence is LDTKKEEQPE. RRM domains lie at 345 to 423, 532 to 604, 663 to 746, and 763 to 840; these read GRLF…PGEE, KVIL…RGPK, VSIF…LSHR, and GKII…YAEE. Positions 864–887 are disordered; sequence EMAALRNGGGRKKLDVDDEENEGF.

The protein belongs to the RRM MRD1 family. As to quaternary structure, interacts with NOP1. Binds to the 35S pre-rRNA and the U3 snoRNA.

Its subcellular location is the nucleus. In terms of biological role, involved in pre-rRNA processing. Required for maintaining steady-state levels of 40S ribosomal subunit. Required for the initial processing of pre-rRNA at the A0 to A2 sites, leading to the processing of the 23S pre-rRNA intermediate to the 18S rRNA. This chain is Multiple RNA-binding domain-containing protein 1 (MRD1), found in Saccharomyces cerevisiae (strain ATCC 204508 / S288c) (Baker's yeast).